A 121-amino-acid polypeptide reads, in one-letter code: Large ribosomal subunit protein bL19 (121 aa).

This sequence belongs to the bacterial ribosomal protein bL19 family.

Functionally, this protein is located at the 30S-50S ribosomal subunit interface and may play a role in the structure and function of the aminoacyl-tRNA binding site. This is Large ribosomal subunit protein bL19 from Chlamydia caviae (strain ATCC VR-813 / DSM 19441 / 03DC25 / GPIC) (Chlamydophila caviae).